The chain runs to 125 residues: RutC family protein aq_364 (125 aa).

The protein belongs to the RutC family.

This is RutC family protein aq_364 from Aquifex aeolicus (strain VF5).